Reading from the N-terminus, the 581-residue chain is MITRLSHLFLRTLRDDPADAEVPSHKLLVRAGYVRRIAPGVYSWLPLGLRVLREVERVVREEMNGIGAQEISLPALLPREPYEASNRWTEYGEGLFRLKDRKGGDYLLGPTHEELFALTVKGEYNSYKDFPVTLYQVQTKYRDEERPRAGILRGREFVMKDSYSFDLTDEGLTESYRAHRDAYERIFARLGVKYVIVSATSGAMGGSASEEFLAESEIGEDTYVRCLESGYAANVEAVKTLAPEPIPFDGLPAAKVYDTPDTPTIATLVAWANEADLGRTVTAADTLKNLLVKVRQPGGKWELLAIGVPGDREVDDKRLGASLEPAEFELLTEADFEANPFLVKGYVGPKALQANGVRYLVDPRIVDGTSWITGADEKGRHVVGLVAGRDFVPDGTIEAAEVRGGDPSPDGAGELVAARGIEIGHVFQLGRKYTDVFSVDVLGENGKPVRPTMGSYGVGVSRLVAVIAEQHHDDKGLRWPAEVSPADVHVVIANKDDTAREGAEGLAADLDKAGLEVILDDRKASPGVKFKDSELLGVPLVVVVGRGWGEGKVEVRDRFTGESREVAAESALSEIVKTVRG.

This sequence belongs to the class-II aminoacyl-tRNA synthetase family. ProS type 1 subfamily. As to quaternary structure, homodimer.

It is found in the cytoplasm. The enzyme catalyses tRNA(Pro) + L-proline + ATP = L-prolyl-tRNA(Pro) + AMP + diphosphate. Functionally, catalyzes the attachment of proline to tRNA(Pro) in a two-step reaction: proline is first activated by ATP to form Pro-AMP and then transferred to the acceptor end of tRNA(Pro). As ProRS can inadvertently accommodate and process non-cognate amino acids such as alanine and cysteine, to avoid such errors it has two additional distinct editing activities against alanine. One activity is designated as 'pretransfer' editing and involves the tRNA(Pro)-independent hydrolysis of activated Ala-AMP. The other activity is designated 'posttransfer' editing and involves deacylation of mischarged Ala-tRNA(Pro). The misacylated Cys-tRNA(Pro) is not edited by ProRS. This chain is Proline--tRNA ligase, found in Rhodococcus opacus (strain B4).